Consider the following 439-residue polypeptide: C4-dicarboxylate transport protein (439 aa).

Helical transmembrane passes span 9-29 (HLYF…YYLP), 45-65 (MIKM…IAGM), 80-100 (LYFE…INII), 150-170 (GEIL…SAMG), 186-206 (AFFG…FGAM), 221-241 (LGML…VVLG), 291-311 (VVGL…SIYL), 334-354 (ILGV…SGFV), and 357-377 (AATF…ILGI).

This sequence belongs to the dicarboxylate/amino acid:cation symporter (DAACS) (TC 2.A.23) family.

It is found in the cell inner membrane. Its function is as follows. Responsible for the transport of dicarboxylates such as succinate, fumarate, and malate from the periplasm across the membrane. The protein is C4-dicarboxylate transport protein of Geobacter sp. (strain M21).